The chain runs to 960 residues: Lon protease homolog, mitochondrial (960 aa).

The transit peptide at 1 to 56 (MYRAGALVLRSATLRRTRFLAAHQNFATISSQRSSVLLAKSLESSIGGAGNQKKFY) directs the protein to the mitochondrion. Positions 92 to 352 (VPILAINRYP…IALLLIQKEK (261 aa)) constitute a Lon N-terminal domain. The interval 195-250 (PKTDTPLNGRRARGKRAGLPPTPPPTPPLSTPTSAPEASATSPEEKEEKKDPERKG) is disordered. Over residues 214 to 224 (PPTPPPTPPLS) the composition is skewed to pro residues. A compositionally biased stretch (low complexity) spans 225 to 236 (TPTSAPEASATS). Basic and acidic residues predominate over residues 237 to 250 (PEEKEEKKDPERKG). 505-512 (GPPGVGKT) contacts ATP. The disordered stretch occupies residues 712 to 748 (EQQPEDEQPAATTAISENSDAEPVSTPSDPPTFTPEK). Positions 773-960 (VTPPGVIMGL…YDELYEHLFQ (188 aa)) constitute a Lon proteolytic domain. Catalysis depends on residues Ser-867 and Lys-910.

Belongs to the peptidase S16 family. Homohexamer or homoheptamer. Organized in a ring with a central cavity.

The protein localises to the mitochondrion matrix. It carries out the reaction Hydrolysis of proteins in presence of ATP.. In terms of biological role, ATP-dependent serine protease that mediates the selective degradation of misfolded, unassembled or oxidatively damaged polypeptides as well as certain short-lived regulatory proteins in the mitochondrial matrix. May also have a chaperone function in the assembly of inner membrane protein complexes. Participates in the regulation of mitochondrial gene expression and in the maintenance of the integrity of the mitochondrial genome. Binds to mitochondrial DNA in a site-specific manner. The protein is Lon protease homolog, mitochondrial of Caenorhabditis briggsae.